The following is a 230-amino-acid chain: Large ribosomal subunit protein uL1 (230 aa).

This sequence belongs to the universal ribosomal protein uL1 family. Part of the 50S ribosomal subunit.

Functionally, binds directly to 23S rRNA. The L1 stalk is quite mobile in the ribosome, and is involved in E site tRNA release. Its function is as follows. Protein L1 is also a translational repressor protein, it controls the translation of the L11 operon by binding to its mRNA. This is Large ribosomal subunit protein uL1 from Granulibacter bethesdensis (strain ATCC BAA-1260 / CGDNIH1).